Reading from the N-terminus, the 94-residue chain is Adaptation to cold protein J (94 aa).

The 91-residue stretch at 3-93 folds into the J domain; it reads NHFSVLGIKP…AMRELWDQFY (91 aa). The interval 74–94 is essential for interaction with AtcC; the sequence is NNVIVTDPNSAMRELWDQFYP.

Interacts via its C-terminal extension with AtcC. Does not interact with AtcA and AtcB.

Its function is as follows. Involved in cold adaptation. The J-domain is functional and can stimulate the ATPase activity of the DnaK chaperone. May work as a co-chaperone of the DnaK system to support cold resistance. The polypeptide is Adaptation to cold protein J (Shewanella oneidensis (strain ATCC 700550 / JCM 31522 / CIP 106686 / LMG 19005 / NCIMB 14063 / MR-1)).